The following is a 93-amino-acid chain: U8-theraphotoxin-Hs1b (93 aa).

The N-terminal stretch at M1–C18 is a signal peptide. 4 cysteine pairs are disulfide-bonded: C40/C54, C40/C81, C53/C66, and C84/C91.

This sequence belongs to the neurotoxin 27 (Jztx-72) family. ICK-72 subfamily. Expressed by the venom gland.

Its subcellular location is the secreted. Probable neurotoxin with ion channel impairing activity. This Cyriopagopus schmidti (Chinese bird spider) protein is U8-theraphotoxin-Hs1b.